The following is an 881-amino-acid chain: Squamosa promoter-binding-like protein 1 (881 aa).

Residues 49–69 are disordered; the sequence is FPLGNSSNSSSSCSDEGNDKK. Positions 53–62 are enriched in low complexity; sequence NSSNSSSSCS. The tract at residues 96–187 is sufficient and necessary for DNA binding; that stretch reads PAKKTKSGAV…RKTNPEPGAN (92 aa). An SBP-type zinc finger spans residues 103-180; that stretch reads GAVCQVENCE…AGHNKRRRKT (78 aa). The Zn(2+) site is built by C106, C111, C128, H131, C147, C150, H154, and C166. The Bipartite nuclear localization signal signature appears at 163–179; that stretch reads KRSCRRRLAGHNKRRRK. The segment covering 170 to 179 has biased composition (basic residues); it reads LAGHNKRRRK. Disordered regions lie at residues 170–193 and 274–358; these read LAGH…PSDD and FSAR…EDAQ. Positions 275–284 are enriched in polar residues; it reads SARQDGTATE. A compositionally biased stretch (basic and acidic residues) spans 285–295; it reads NRSEKQVKMND. Positions 319–338 are enriched in polar residues; sequence PATSSLDYPSWIHQSSPPQT. A compositionally biased stretch (low complexity) spans 339–356; that stretch reads SRNSDSASDQSPSSSSED.

Requires Zn(2+) as cofactor.

The protein localises to the nucleus. Its function is as follows. Trans-acting factor that binds specifically to the consensus nucleotide sequence 5'-TNCGTACAA-3' of AP1 promoter. Binds specifically to the 5'-GTAC-3' core sequence. The protein is Squamosa promoter-binding-like protein 1 (SPL1) of Arabidopsis thaliana (Mouse-ear cress).